A 357-amino-acid chain; its full sequence is Protein ATP1B4 (357 aa).

Residues 1 to 110 lie on the Nuclear side of the membrane; it reads MRRQLRSRRA…FLARTGQSWS (110 aa). The disordered stretch occupies residues 15 to 80; it reads YSYRYRLDDP…EEGQGQPTGN (66 aa). Residues 52–73 show a composition bias toward acidic residues; the sequence is EEEEEEEEKEEEEEEEKEEEEG. Residues 111-131 traverse the membrane as a helical; Signal-anchor for type II membrane protein segment; the sequence is LILLIYFFFYASLAAVITLCM. The Perinuclear space segment spans residues 132–357; the sequence is YTLFLTISPY…RVIFTLNIET (226 aa).

This sequence belongs to the X(+)/potassium ATPases subunit beta family. In terms of assembly, associates with a SMAD7-transcriptional complex. Interacts with SNW1 and TOR1AIP1. According to PubMed:17592128, does not associate with known Na,K-ATPase alpha-subunits. Highly expressed in skeletal muscle and at a lower level in heart.

It localises to the nucleus inner membrane. In terms of biological role, may act as a transcriptional coregulator during muscle development through its interaction with SNW1. Has lost its ancestral function as a Na,K-ATPase beta-subunit. The sequence is that of Protein ATP1B4 (ATP1B4) from Homo sapiens (Human).